Reading from the N-terminus, the 223-residue chain is Glucosyl-3-phosphoglycerate phosphatase (223 aa).

Arg10 provides a ligand contact to substrate. Residue His11 is the Tele-phosphohistidine intermediate of the active site. Lys47 participates in a covalent cross-link: Isoglutamyl lysine isopeptide (Lys-Gln) (interchain with Q-Cter in protein Pup). A substrate-binding site is contributed by Arg60. Catalysis depends on Glu84, which acts as the Proton donor/acceptor. His159 lines the substrate pocket.

This sequence belongs to the phosphoglycerate mutase family. Homodimer. Dimerization of the enzyme is essential for its dephosphorylation activity.

The enzyme catalyses (2R)-2-O-(alpha-D-glucopyranosyl)-3-phospho-glycerate + H2O = (2R)-2-O-(alpha-D-glucopyranosyl)-glycerate + phosphate. It catalyses the reaction 2-O-(alpha-D-mannosyl)-3-phosphoglycerate + H2O = (2R)-2-O-(alpha-D-mannosyl)-glycerate + phosphate. It carries out the reaction (2R)-2-O-[alpha-D-mannopyranosyl-(1-&gt;2)-alpha-D-glucopyranosyl]-3-phospho-glycerate + H2O = (2R)-2-O-[alpha-D-mannopyranosyl-(1-&gt;2)-alpha-D-glucopyranosyl]-glycerate + phosphate. With respect to regulation, progressively inhibited by cobalt ions at concentrations between 10-50 mM and by copper ions at any concentration between 1-50 mM. Involved in the biosynthesis of mycobacterial methylglucose lipopolysaccharides (MGLPs). Catalyzes the dephosphorylation of glucosyl-3-phosphoglycerate (GPG) to glucosylglycerate (GG). GPG is the preferred substrate, but GpgP also exhibits low dephosphorylation activity on mannosyl-3-phosphoglycerate (MPG) and mannosylglucosyl-3-phosphoglycerate (MGPG) in vitro. Shows only trace of phosphoglycerate mutase (PGM) activity. This Mycobacterium tuberculosis (strain ATCC 25618 / H37Rv) protein is Glucosyl-3-phosphoglycerate phosphatase.